The chain runs to 347 residues: Methylthioribose-1-phosphate isomerase (347 aa).

Substrate is bound by residues 46–48 (RGA), R89, and Q196. D237 acts as the Proton donor in catalysis. 247–248 (NK) is a binding site for substrate.

The protein belongs to the eIF-2B alpha/beta/delta subunits family. MtnA subfamily.

The catalysed reaction is 5-(methylsulfanyl)-alpha-D-ribose 1-phosphate = 5-(methylsulfanyl)-D-ribulose 1-phosphate. It participates in amino-acid biosynthesis; L-methionine biosynthesis via salvage pathway; L-methionine from S-methyl-5-thio-alpha-D-ribose 1-phosphate: step 1/6. Its function is as follows. Catalyzes the interconversion of methylthioribose-1-phosphate (MTR-1-P) into methylthioribulose-1-phosphate (MTRu-1-P). This is Methylthioribose-1-phosphate isomerase from Chloroflexus aurantiacus (strain ATCC 29366 / DSM 635 / J-10-fl).